Reading from the N-terminus, the 143-residue chain is uncharacterized protein (143 aa).

The segment at 1 to 37 (MSAPASSSAIAPSQPTAPGHARHSASWSASASDPSGA) is disordered.

It belongs to the dynein light chain Tctex-type family.

This is an uncharacterized protein from Mycosarcoma maydis (Corn smut fungus).